The chain runs to 194 residues: Ribonuclease HII (194 aa).

The RNase H type-2 domain maps to 3–193; that stretch reads ILTAGVDEAG…VRNLLAQQAL (191 aa). A divalent metal cation is bound by residues D9, E10, and D101.

The protein belongs to the RNase HII family. Requires Mn(2+) as cofactor. Mg(2+) serves as cofactor.

It localises to the cytoplasm. The enzyme catalyses Endonucleolytic cleavage to 5'-phosphomonoester.. Its function is as follows. Endonuclease that specifically degrades the RNA of RNA-DNA hybrids. The protein is Ribonuclease HII of Neisseria gonorrhoeae (strain ATCC 700825 / FA 1090).